Reading from the N-terminus, the 409-residue chain is Argininosuccinate synthase (409 aa).

ATP is bound by residues 10-18 (AYSGGLDTS) and Ala-37. 2 residues coordinate L-citrulline: Tyr-90 and Ser-95. Gly-120 is an ATP binding site. L-aspartate-binding residues include Thr-122, Asn-126, and Asp-127. Asn-126 lines the L-citrulline pocket. L-citrulline-binding residues include Arg-130, Ser-182, Ser-191, Glu-267, and Tyr-279.

This sequence belongs to the argininosuccinate synthase family. Type 1 subfamily. Homotetramer.

It localises to the cytoplasm. The catalysed reaction is L-citrulline + L-aspartate + ATP = 2-(N(omega)-L-arginino)succinate + AMP + diphosphate + H(+). It participates in amino-acid biosynthesis; L-arginine biosynthesis; L-arginine from L-ornithine and carbamoyl phosphate: step 2/3. This is Argininosuccinate synthase from Azoarcus sp. (strain BH72).